A 201-amino-acid polypeptide reads, in one-letter code: Large ribosomal subunit protein uL4 (201 aa).

Positions 46–71 (QKTRAEVVGSGKKPWRQKGTGRARAG) are disordered.

It belongs to the universal ribosomal protein uL4 family. As to quaternary structure, part of the 50S ribosomal subunit.

Functionally, one of the primary rRNA binding proteins, this protein initially binds near the 5'-end of the 23S rRNA. It is important during the early stages of 50S assembly. It makes multiple contacts with different domains of the 23S rRNA in the assembled 50S subunit and ribosome. Its function is as follows. Forms part of the polypeptide exit tunnel. The sequence is that of Large ribosomal subunit protein uL4 from Shewanella piezotolerans (strain WP3 / JCM 13877).